We begin with the raw amino-acid sequence, 426 residues long: Serine--tRNA ligase (426 aa).

L-serine is bound at residue 233–235 (TAE). 264 to 266 (RSE) serves as a coordination point for ATP. E287 serves as a coordination point for L-serine. 351 to 354 (EISS) lines the ATP pocket. An L-serine-binding site is contributed by S387.

The protein belongs to the class-II aminoacyl-tRNA synthetase family. Type-1 seryl-tRNA synthetase subfamily. As to quaternary structure, homodimer. The tRNA molecule binds across the dimer.

The protein resides in the cytoplasm. It catalyses the reaction tRNA(Ser) + L-serine + ATP = L-seryl-tRNA(Ser) + AMP + diphosphate + H(+). It carries out the reaction tRNA(Sec) + L-serine + ATP = L-seryl-tRNA(Sec) + AMP + diphosphate + H(+). Its pathway is aminoacyl-tRNA biosynthesis; selenocysteinyl-tRNA(Sec) biosynthesis; L-seryl-tRNA(Sec) from L-serine and tRNA(Sec): step 1/1. In terms of biological role, catalyzes the attachment of serine to tRNA(Ser). Is also able to aminoacylate tRNA(Sec) with serine, to form the misacylated tRNA L-seryl-tRNA(Sec), which will be further converted into selenocysteinyl-tRNA(Sec). This is Serine--tRNA ligase from Francisella philomiragia subsp. philomiragia (strain ATCC 25017 / CCUG 19701 / FSC 153 / O#319-036).